The following is a 270-amino-acid chain: Urease accessory protein UreD (270 aa).

It belongs to the UreD family. In terms of assembly, ureD, UreF and UreG form a complex that acts as a GTP-hydrolysis-dependent molecular chaperone, activating the urease apoprotein by helping to assemble the nickel containing metallocenter of UreC. The UreE protein probably delivers the nickel.

The protein localises to the cytoplasm. Required for maturation of urease via the functional incorporation of the urease nickel metallocenter. This chain is Urease accessory protein UreD, found in Beijerinckia indica subsp. indica (strain ATCC 9039 / DSM 1715 / NCIMB 8712).